We begin with the raw amino-acid sequence, 453 residues long: MSSISDTVKRAREAFNSGKTRSLQFRIQQLEALQRMINENLKSISGALASDLGKNEWTSYYEEVAHVLEELDTTIKELPDWAEDEPVAKTRQTQQDDLYIHSEPLGVVLVIGAWNYPFNLTIQPMVGAVAAGNAVILKPSEVSGHMADLLATLIPQYMDQNLYLVVKGGVPETTELLKERFDHIMYTGSTAVGKIVMAAAAKHLTPVTLELGGKSPCYVDKDCDLDVACRRIAWGKFMNSGQTCVAPDYILCDPSIQNQIVEKLKKSLKDFYGEDAKQSRDYGRIINDRHFQRVKGLIDNQKVAHGGTWDQSSRYIAPTILVDVDPQSPVMQEEIFGPVMPIVCVRSLEEAIQFINQREKPLALYVFSNNEKVIKKMIAETSSGGVTANDVIVHITVPTLPFGGVGNSGMGAYHGKKSFETFSHRRSCLVKSLLNEEAHKARYPPSPAKMPRH.

The residue at position 2 (Ser2) is an N-acetylserine. At Lys178 the chain carries N6-acetyllysine. 188–193 (GSTAVG) contacts NAD(+). Residue Lys194 is modified to N6-acetyllysine. Active-site residues include Glu210 and Cys244.

It belongs to the aldehyde dehydrogenase family. In terms of assembly, homodimer.

It is found in the cytoplasm. The enzyme catalyses an aldehyde + NAD(+) + H2O = a carboxylate + NADH + 2 H(+). It catalyses the reaction octanal + NAD(+) + H2O = octanoate + NADH + 2 H(+). Its function is as follows. ALDHs play a major role in the detoxification of alcohol-derived acetaldehyde. They are involved in the metabolism of corticosteroids, biogenic amines, neurotransmitters, and lipid peroxidation. Oxidizes medium and long chain aldehydes into non-toxic fatty acids. Preferentially oxidizes aromatic aldehyde substrates. Comprises about 50 percent of corneal epithelial soluble proteins. May play a role in preventing corneal damage caused by ultraviolet light. This is Aldehyde dehydrogenase, dimeric NADP-preferring (Aldh3a1) from Rattus norvegicus (Rat).